We begin with the raw amino-acid sequence, 834 residues long: MTRSPFRRLVFGTLRRLLYLWVRSETINQSSFTLNLDRSRPVFYVLQNPSLTDLAVVDTECTKAGLPRPVLPVSVGSLIEPAAFFYLTPDPDWLGRQDKRGAPPTLTRLVSALSQNAAEDAQIIPVSVFWGQSPDSENSPWKLLFADSWAVTGRLRRLLSIMILGRKTRVQFSAPIHLRELIEHNKGHERTVRMAQRILRVHFRNLKAAVIGPDISHRRNLVKGLLNQPLVKQAILDEAERENISPEKAKAQALRYGNEIASDYTYTAIRFLEVVLSWFWNKIYDGIKVNHIEGVQKVAQGHEVIYVPCHRSHIDYLLLSYLLFRNGLTPPHIAAGINLNMPVIGSLLRRGGAFFMRRTFKGNPLYTSVFNEYLHTLFTKGFPVEYFVEGGRSRTGRMLQPKTGMLAITLRSFLRSSRMPIVFVPVYIGYERVLEGRTYLGELRGASKKKESIFDIFKVIGALKQRFGQVAVNFGEPIKLAEFLDSEQPGWRQQELGPQFKPAWLNETTNRLGEKVAQHLNEAAAINPVNLVALALLSTTRLALDDRAMARVLDLYLALLRKVPYSPHTTLPEGDGRALIEHVKDMDLLSEQNDALGKILYLDEQNAVLMTYYRNNVLHIFALPALLASFFQSTSRMSREQILRYTRALYPYLQSELFIRWTLDELDAVIDQWLEAFVEQGLLRFEKDVYLRPAPSSRHFVLLTLLSKSIAQTLQRFYMTVSLLLNSGQNSISAEELEDLCTVMAQRLSILHGLNAPEFFDKSLFRHFIQTLLDLDVLRRDEAGKLSYHELLGELAEGAAKRVLPAEIRLSIRQVALHRSEDAADQVAPPVQND.

Positions 309–314 (CHRSHI) match the HXXXXD motif motif.

It belongs to the GPAT/DAPAT family.

Its subcellular location is the cell inner membrane. The catalysed reaction is sn-glycerol 3-phosphate + an acyl-CoA = a 1-acyl-sn-glycero-3-phosphate + CoA. Its pathway is phospholipid metabolism; CDP-diacylglycerol biosynthesis; CDP-diacylglycerol from sn-glycerol 3-phosphate: step 1/3. The polypeptide is Glycerol-3-phosphate acyltransferase (Pseudomonas fluorescens (strain Pf0-1)).